Reading from the N-terminus, the 143-residue chain is Transcriptional regulator MraZ (143 aa).

SpoVT-AbrB domains are found at residues 5-47 and 76-119; these read EYTH…PLIE and ACEC…DAER.

It belongs to the MraZ family. As to quaternary structure, forms oligomers.

Its subcellular location is the cytoplasm. The protein resides in the nucleoid. In Limosilactobacillus fermentum (strain NBRC 3956 / LMG 18251) (Lactobacillus fermentum), this protein is Transcriptional regulator MraZ.